The chain runs to 482 residues: PAN domain-containing protein At5g03700 (482 aa).

A signal peptide spans 1-31 (MEGLCLNSFTRVLLLLFVFLVFSHKWQRVNA). Residues 330–411 (CDKTTEFKVV…SKLGYFKVRE (82 aa)) form the PAN domain. 2 disulfides stabilise this stretch: Cys363–Cys385 and Cys367–Cys373. The helical transmembrane segment at 425-445 (GMSLLAVIALVLMVAMVYVGF) threads the bilayer.

Its subcellular location is the membrane. The chain is PAN domain-containing protein At5g03700 from Arabidopsis thaliana (Mouse-ear cress).